The chain runs to 358 residues: Protein RecA (358 aa).

69–76 (GPESSGKT) provides a ligand contact to ATP.

The protein belongs to the RecA family.

The protein localises to the cytoplasm. Functionally, can catalyze the hydrolysis of ATP in the presence of single-stranded DNA, the ATP-dependent uptake of single-stranded DNA by duplex DNA, and the ATP-dependent hybridization of homologous single-stranded DNAs. It interacts with LexA causing its activation and leading to its autocatalytic cleavage. This chain is Protein RecA, found in Trichormus variabilis (strain ATCC 29413 / PCC 7937) (Anabaena variabilis).